The primary structure comprises 115 residues: Large ribosomal subunit protein bL20 (115 aa).

It belongs to the bacterial ribosomal protein bL20 family.

Its function is as follows. Binds directly to 23S ribosomal RNA and is necessary for the in vitro assembly process of the 50S ribosomal subunit. It is not involved in the protein synthesizing functions of that subunit. This chain is Large ribosomal subunit protein bL20, found in Synechococcus sp. (strain WH7803).